A 580-amino-acid polypeptide reads, in one-letter code: DBIRD complex subunit ZNF326 (580 aa).

The mediates transcriptional activation stretch occupies residues 1–124 (MDFEDDYVHS…YRNSLDSFGG (124 aa)). Phosphoserine occurs at positions 48, 56, 63, 69, 81, 82, 91, 106, 114, 118, 121, and 137. Residue Lys-140 forms a Glycyl lysine isopeptide (Lys-Gly) (interchain with G-Cter in SUMO2) linkage. Residues 156-196 (SYSSFSSPHMKPAPVGSRGRGTPAYPESTFGSRSYDAFGGP) are disordered. At Arg-173 the chain carries Omega-N-methylarginine. Ser-212 carries the phosphoserine modification. Arg-235 is modified (omega-N-methylarginine). Positions 238–260 (KRKMMQIFIKPGGAFIKKPKLAK) match the Bipartite nuclear localization signal motif. Residue Lys-240 forms a Glycyl lysine isopeptide (Lys-Gly) (interchain with G-Cter in SUMO2) linkage. Lys-247 is subject to N6-acetyllysine; alternate. Residue Lys-247 forms a Glycyl lysine isopeptide (Lys-Gly) (interchain with G-Cter in SUMO2); alternate linkage. Residues Lys-254 and Lys-264 each participate in a glycyl lysine isopeptide (Lys-Gly) (interchain with G-Cter in SUMO2) cross-link. Positions 256 to 302 (PKLAKPMDKMNLSKSPTKTDPKNEEEEKRRIEARREKQRRRREKNSE) are disordered. Ser-270 carries the phosphoserine modification. Residues 272-290 (TKTDPKNEEEEKRRIEARR) are compositionally biased toward basic and acidic residues. The segment at 314 to 336 (CSFCKFRTFEEKDIELHLESSSH) adopts a C2H2 AKAP95-type 1 zinc-finger fold. Lys-401 is covalently cross-linked (Glycyl lysine isopeptide (Lys-Gly) (interchain with G-Cter in SUMO2)). A C2H2 AKAP95-type 2 zinc finger spans residues 407-430 (CSACSVYIPALHSSVQLHLKSPDH). Glycyl lysine isopeptide (Lys-Gly) (interchain with G-Cter in SUMO2) cross-links involve residues Lys-459 and Lys-467. The disordered stretch occupies residues 470-580 (NPFEIQDHPQ…ATEQCEHRQM (111 aa)). A compositionally biased stretch (acidic residues) spans 483-529 (IEGDEEDEEKIDEPIEEEEEEEEEEEEEGEEAGSVEEEGDVEGEEGT). Over residues 530–539 (AEAAAAGEAD) the composition is skewed to low complexity. Positions 540-562 (AVGEAEGAGEAEEAEEEEEEEGT) are enriched in acidic residues.

The protein belongs to the AKAP95 family. In terms of assembly, component of the DBIRD complex. Interacts with CCAR2; the interaction is direct. Ubiquitously expressed in adult tissues. Highly expressed in neuronal tissues such as brain and neural tube.

Its subcellular location is the nucleus matrix. Functionally, core component of the DBIRD complex, a multiprotein complex that acts at the interface between core mRNP particles and RNA polymerase II (RNAPII) and integrates transcript elongation with the regulation of alternative splicing: the DBIRD complex affects local transcript elongation rates and alternative splicing of a large set of exons embedded in (A + T)-rich DNA regions. May also play a role in neuronal differentiation. Able to bind DNA and activate expression in vitro. The chain is DBIRD complex subunit ZNF326 (Znf326) from Mus musculus (Mouse).